A 1642-amino-acid chain; its full sequence is Mitochondrial 3' processome subunit 2 (1642 aa).

The transit peptide at 1-27 (MGLPFLCHTRVCLFSNKIPFVLCGSRF) directs the protein to the mitochondrion. Disordered regions lie at residues 43 to 69 (ETLN…PQKK) and 745 to 772 (KGEK…LSGP). Residues 49–65 (ELSSPSTSKEPSVGSDS) show a composition bias toward polar residues.

In terms of assembly, component of the mitochondrial 3' processome (MPsome) complex composed at least of terminal uridylyltransferase KRET1/TUT1, 3'-5' exonuclease DSS1, MPSS1, MPSS2 and MPSS3. Within the complex, interacts with DSS1.

Its subcellular location is the mitochondrion. In terms of biological role, as part of the mitochondrial 3' processome (MPsome), involved in the maturation of guided RNA (gRNA) precursors. The polypeptide is Mitochondrial 3' processome subunit 2 (Trypanosoma brucei brucei).